The primary structure comprises 431 residues: Na(+)-translocating NADH-quinone reductase subunit F (431 aa).

The chain crosses the membrane as a helical span at residues 9–29; the sequence is FICIASLIFCAIGVILAGVIL. The 95-residue stretch at 39 to 133 folds into the 2Fe-2S ferredoxin-type domain; that stretch reads HPCKLKINDN…DMSLEIEERY (95 aa). [2Fe-2S] cluster-binding residues include Cys76, Cys82, Cys85, and Cys117. The FAD-binding FR-type domain maps to 136–286; that stretch reads ASSWEGTVIS…SGPYGESFMK (151 aa). The catalytic stretch occupies residues 289–413; sequence DRPLIFLIGG…PLHNSSILKL (125 aa).

This sequence belongs to the NqrF family. As to quaternary structure, composed of six subunits; NqrA, NqrB, NqrC, NqrD, NqrE and NqrF. It depends on [2Fe-2S] cluster as a cofactor. FAD is required as a cofactor.

It localises to the cell inner membrane. It carries out the reaction a ubiquinone + n Na(+)(in) + NADH + H(+) = a ubiquinol + n Na(+)(out) + NAD(+). In terms of biological role, NQR complex catalyzes the reduction of ubiquinone-1 to ubiquinol by two successive reactions, coupled with the transport of Na(+) ions from the cytoplasm to the periplasm. The first step is catalyzed by NqrF, which accepts electrons from NADH and reduces ubiquinone-1 to ubisemiquinone by a one-electron transfer pathway. In Chlamydia pneumoniae (Chlamydophila pneumoniae), this protein is Na(+)-translocating NADH-quinone reductase subunit F.